The following is a 267-amino-acid chain: Phosphate import ATP-binding protein PstB (267 aa).

Positions 21–262 constitute an ABC transporter domain; it reads IEVKNLNFYY…PREKRTQDYI (242 aa). 53–60 contributes to the ATP binding site; sequence GPSGCGKS.

The protein belongs to the ABC transporter superfamily. Phosphate importer (TC 3.A.1.7) family. As to quaternary structure, the complex is composed of two ATP-binding proteins (PstB), two transmembrane proteins (PstC and PstA) and a solute-binding protein (PstS).

It is found in the cell inner membrane. It carries out the reaction phosphate(out) + ATP + H2O = ADP + 2 phosphate(in) + H(+). Part of the ABC transporter complex PstSACB involved in phosphate import. Responsible for energy coupling to the transport system. This is Phosphate import ATP-binding protein PstB from Mesorhizobium japonicum (strain LMG 29417 / CECT 9101 / MAFF 303099) (Mesorhizobium loti (strain MAFF 303099)).